We begin with the raw amino-acid sequence, 250 residues long: MRKPLMAGNWKMNKTVSEAVSFVKALKGAVTGVSNVEILVCPAFTVLYEVNNEIKGSNINLGAQNLFGEAKGAFTGEISTAMIRDTGCSYVIVGHSERRQYFGETDEAVNKKTKAALAADITPIVCVGETLKERENNVTFSVIEKQVRNGLADLTLQQASLTVIAYEPVWAIGTGKTATPDQAQEVHSFIRKIYAQMYEESAEKVRILYGGSVNPGNVSDLMKKSDIDGGLVGGASLEAESFTKLVKYSK.

Position 9 to 11 (9 to 11 (NWK)) interacts with substrate. The Electrophile role is filled by H95. E167 (proton acceptor) is an active-site residue. Residues G173, S212, and 233-234 (GG) each bind substrate.

It belongs to the triosephosphate isomerase family. In terms of assembly, homodimer.

It is found in the cytoplasm. The catalysed reaction is D-glyceraldehyde 3-phosphate = dihydroxyacetone phosphate. It participates in carbohydrate biosynthesis; gluconeogenesis. It functions in the pathway carbohydrate degradation; glycolysis; D-glyceraldehyde 3-phosphate from glycerone phosphate: step 1/1. Involved in the gluconeogenesis. Catalyzes stereospecifically the conversion of dihydroxyacetone phosphate (DHAP) to D-glyceraldehyde-3-phosphate (G3P). The protein is Triosephosphate isomerase of Endomicrobium trichonymphae.